Consider the following 958-residue polypeptide: Probable protein phosphatase DDB_G0282105 (958 aa).

2 consecutive transmembrane segments (helical) span residues 2-22 (VLMMDIKIMSAFSILFLSLMV) and 26-46 (FLEFLANTVYAAILFIIILFF). Residues 142-330 (SASQQSELTN…KDKERERSSS (189 aa)) are a coiled coil. A compositionally biased stretch (basic and acidic residues) spans 312–328 (QEKEKQKLEKDKERERS). 5 disordered regions span residues 312–361 (QEKE…PIPI), 380–421 (SVNG…PKFK), 445–475 (HLGSDFFTPANTTTSTTTTTSTTSTSTTTPI), 491–525 (ITSPTTNTTNDILSSSSSSSSSSSSLLTTNAILSP), and 619–659 (NNNN…NDNK). Low complexity-rich tracts occupy residues 329 to 361 (SSFSSDISSSSTTSTTASTFLSSSPSKSIPIPI), 390 to 401 (SSVSPPSSSYLR), 452 to 475 (TPANTTTSTTTTTSTTSTSTTTPI), 491 to 515 (ITSPTTNTTNDILSSSSSSSSSSSS), and 619 to 655 (NNNNKNNIEESNNNNNNNNNNNNNNNNNNNNNNNNNK). Residues 613-666 (NFLKTNNNNNKNNIEESNNNNNNNNNNNNNNNNNNNNNNNNNKNDNKEVNSKLE) adopt a coiled-coil conformation. Residues 675 to 958 (KIGLRRAKKK…DNVTVIIVKL (284 aa)) enclose the PPM-type phosphatase domain. Mn(2+)-binding residues include Asp722, Gly723, Asp905, and Asp949.

This sequence in the C-terminal section; belongs to the PP2C family. It depends on Mg(2+) as a cofactor. Mn(2+) serves as cofactor.

Its subcellular location is the membrane. It carries out the reaction O-phospho-L-seryl-[protein] + H2O = L-seryl-[protein] + phosphate. It catalyses the reaction O-phospho-L-threonyl-[protein] + H2O = L-threonyl-[protein] + phosphate. The sequence is that of Probable protein phosphatase DDB_G0282105 from Dictyostelium discoideum (Social amoeba).